The following is a 229-amino-acid chain: Peptidase E (229 aa).

Active-site charge relay system residues include Ser120, Asp135, and His157.

It belongs to the peptidase S51 family.

The protein resides in the cytoplasm. It catalyses the reaction Dipeptidase E catalyzes the hydrolysis of dipeptides Asp-|-Xaa. It does not act on peptides with N-terminal Glu, Asn or Gln, nor does it cleave isoaspartyl peptides.. Hydrolyzes dipeptides containing N-terminal aspartate residues. May play a role in allowing the cell to use peptide aspartate to spare carbon otherwise required for the synthesis of the aspartate family of amino acids. This is Peptidase E from Salmonella typhi.